Consider the following 559-residue polypeptide: YTH domain-containing family protein 1 (559 aa).

The interval 1 to 49 is disordered; that stretch reads MSATSVDPQRTKGQDNKVQNGSLHQKDAVHDNDFEPYLSGQSNPSNSYP. Serine 2 is modified (N-acetylserine). Residues 24 to 33 show a composition bias toward basic and acidic residues; that stretch reads HQKDAVHDND. At serine 182 the chain carries Phosphoserine. Residues 239-365 are disordered; sequence SKPAKPQPKM…PTSAPSVESH (127 aa). Composition is skewed to low complexity over residues 279 to 305 and 314 to 326; these read PAPK…AQPL and QPQY…PLQP. The segment covering 343–361 has biased composition (polar residues); it reads GANSDSNSVGNAQPTSAPS. The region spanning 389-523 is the YTH domain; that stretch reads GRVFIIKSYS…EKAKQVLKII (135 aa). RNA-binding positions include 395-397, aspartate 401, 411-412, asparagine 441, tryptophan 465, and tryptophan 470; these read KSY and WC.

Belongs to the YTHDF family. YTHDF1 subfamily. Interacts with CNOT1; promoting recruitment of the CCR4-NOT complex. Interacts with ribosomes. Interacts with eIF3 (EIF3A or EIF3B). Interacts with YTHDF3. In terms of processing, ubiquitinated by the CUL7-FBXW8 E3 ligase complex leading to degradation. Deubiquitinated and stabilized by USP5 by removing 'Lys-11'-linked polyubiquitination. In terms of tissue distribution, in brain, preferentially expressed in the hippocampus.

It localises to the cytoplasm. The protein localises to the P-body. Its subcellular location is the stress granule. Functionally, specifically recognizes and binds N6-methyladenosine (m6A)-containing mRNAs, and regulates their stability. M6A is a modification present at internal sites of mRNAs and some non-coding RNAs and plays a role in mRNA stability and processing. Acts as a regulator of mRNA stability by promoting degradation of m6A-containing mRNAs via interaction with the CCR4-NOT complex. The YTHDF paralogs (YTHDF1, YTHDF2 and YTHDF3) share m6A-containing mRNAs targets and act redundantly to mediate mRNA degradation and cellular differentiation. Required to facilitate learning and memory formation in the hippocampus by binding to m6A-containing neuronal mRNAs. Acts as a regulator of axon guidance by binding to m6A-containing ROBO3 transcripts. Acts as a negative regulator of antigen cross-presentation in myeloid dendritic cells. In the context of tumorigenesis, negative regulation of antigen cross-presentation limits the anti-tumor response by reducing efficiency of tumor-antigen cross-presentation. Promotes formation of phase-separated membraneless compartments, such as P-bodies or stress granules, by undergoing liquid-liquid phase separation upon binding to mRNAs containing multiple m6A-modified residues: polymethylated mRNAs act as a multivalent scaffold for the binding of YTHDF proteins, juxtaposing their disordered regions and thereby leading to phase separation. The resulting mRNA-YTHDF complexes then partition into different endogenous phase-separated membraneless compartments, such as P-bodies, stress granules or neuronal RNA granules. This is YTH domain-containing family protein 1 from Mus musculus (Mouse).